Here is a 340-residue protein sequence, read N- to C-terminus: Methionine import ATP-binding protein MetN 2 (340 aa).

The 240-residue stretch at 2 to 241 (ITLQNVVKEY…PQEKVTQRFV (240 aa)) folds into the ABC transporter domain. 38–45 (GYSGAGKS) provides a ligand contact to ATP.

This sequence belongs to the ABC transporter superfamily. Methionine importer (TC 3.A.1.24) family. As to quaternary structure, the complex is composed of two ATP-binding proteins (MetN), two transmembrane proteins (MetI) and a solute-binding protein (MetQ).

Its subcellular location is the cell membrane. The catalysed reaction is L-methionine(out) + ATP + H2O = L-methionine(in) + ADP + phosphate + H(+). The enzyme catalyses D-methionine(out) + ATP + H2O = D-methionine(in) + ADP + phosphate + H(+). Its function is as follows. Part of the ABC transporter complex MetNIQ involved in methionine import. Responsible for energy coupling to the transport system. This is Methionine import ATP-binding protein MetN 2 from Listeria monocytogenes serovar 1/2a (strain ATCC BAA-679 / EGD-e).